Reading from the N-terminus, the 186-residue chain is Ribosome-recycling factor (186 aa).

The protein belongs to the RRF family.

It localises to the cytoplasm. Functionally, responsible for the release of ribosomes from messenger RNA at the termination of protein biosynthesis. May increase the efficiency of translation by recycling ribosomes from one round of translation to another. The protein is Ribosome-recycling factor of Limosilactobacillus reuteri (Lactobacillus reuteri).